Reading from the N-terminus, the 162-residue chain is Cyclic pyranopterin monophosphate synthase (162 aa).

Residues 75–77 (LCH) and 113–114 (ME) contribute to the substrate site. The active site involves Asp128.

This sequence belongs to the MoaC family. As to quaternary structure, homohexamer; trimer of dimers.

The catalysed reaction is (8S)-3',8-cyclo-7,8-dihydroguanosine 5'-triphosphate = cyclic pyranopterin phosphate + diphosphate. It functions in the pathway cofactor biosynthesis; molybdopterin biosynthesis. Functionally, catalyzes the conversion of (8S)-3',8-cyclo-7,8-dihydroguanosine 5'-triphosphate to cyclic pyranopterin monophosphate (cPMP). This chain is Cyclic pyranopterin monophosphate synthase, found in Klebsiella pneumoniae subsp. pneumoniae (strain ATCC 700721 / MGH 78578).